The following is a 231-amino-acid chain: Biosynthetic peptidoglycan transglycosylase (231 aa).

The helical transmembrane segment at 12 to 34 threads the bilayer; it reads AAVLAGLALLLVALAVSYRWVPP.

This sequence belongs to the glycosyltransferase 51 family.

It localises to the cell inner membrane. The catalysed reaction is [GlcNAc-(1-&gt;4)-Mur2Ac(oyl-L-Ala-gamma-D-Glu-L-Lys-D-Ala-D-Ala)](n)-di-trans,octa-cis-undecaprenyl diphosphate + beta-D-GlcNAc-(1-&gt;4)-Mur2Ac(oyl-L-Ala-gamma-D-Glu-L-Lys-D-Ala-D-Ala)-di-trans,octa-cis-undecaprenyl diphosphate = [GlcNAc-(1-&gt;4)-Mur2Ac(oyl-L-Ala-gamma-D-Glu-L-Lys-D-Ala-D-Ala)](n+1)-di-trans,octa-cis-undecaprenyl diphosphate + di-trans,octa-cis-undecaprenyl diphosphate + H(+). It participates in cell wall biogenesis; peptidoglycan biosynthesis. Its function is as follows. Peptidoglycan polymerase that catalyzes glycan chain elongation from lipid-linked precursors. This is Biosynthetic peptidoglycan transglycosylase from Rhodospirillum centenum (strain ATCC 51521 / SW).